Reading from the N-terminus, the 115-residue chain is Large ribosomal subunit protein bL19 (115 aa).

Belongs to the bacterial ribosomal protein bL19 family.

In terms of biological role, this protein is located at the 30S-50S ribosomal subunit interface and may play a role in the structure and function of the aminoacyl-tRNA binding site. The sequence is that of Large ribosomal subunit protein bL19 from Lawsonia intracellularis (strain PHE/MN1-00).